Consider the following 299-residue polypeptide: MLDKTRLRIAMQKSGRLSDESQELLARCGIKINLQQQRLIAFAENMPIDILRVRDDDIPGLVMDGVVDLGIIGENVLEEELLTRRAQGEDPRYFTLRRLDFGGCRLSLATSLDSEYTGPQSLQDARIATSYPHLLKQYLDKQGVRFKSCLLNGSVEVAPRAGLADAICDLVSTGATLEANGLREVEVIYRSKACLIQRDGEMPEAKQQLIDRLMTRIQGVIQARESKYIMLHAPSERLDEIVALLPGAERPTILPLAGAQNRVAMHMVSSETLFWETMEKLKALGASSILVLPIEKMME.

The protein belongs to the ATP phosphoribosyltransferase family. Long subfamily. Equilibrium between an active dimeric form, an inactive hexameric form and higher aggregates. Interconversion between the various forms is largely reversible and is influenced by the natural substrates and inhibitors of the enzyme. It depends on Mg(2+) as a cofactor.

It is found in the cytoplasm. It carries out the reaction 1-(5-phospho-beta-D-ribosyl)-ATP + diphosphate = 5-phospho-alpha-D-ribose 1-diphosphate + ATP. The protein operates within amino-acid biosynthesis; L-histidine biosynthesis; L-histidine from 5-phospho-alpha-D-ribose 1-diphosphate: step 1/9. Feedback inhibited by histidine. Catalyzes the condensation of ATP and 5-phosphoribose 1-diphosphate to form N'-(5'-phosphoribosyl)-ATP (PR-ATP). Has a crucial role in the pathway because the rate of histidine biosynthesis seems to be controlled primarily by regulation of HisG enzymatic activity. This chain is ATP phosphoribosyltransferase, found in Serratia proteamaculans (strain 568).